Consider the following 251-residue polypeptide: Hydroxyacylglutathione hydrolase (251 aa).

Residues His59, His61, Asp63, His64, His118, Asp141, and His179 each coordinate Zn(2+).

The protein belongs to the metallo-beta-lactamase superfamily. Glyoxalase II family. Monomer. Zn(2+) is required as a cofactor.

It carries out the reaction an S-(2-hydroxyacyl)glutathione + H2O = a 2-hydroxy carboxylate + glutathione + H(+). It participates in secondary metabolite metabolism; methylglyoxal degradation; (R)-lactate from methylglyoxal: step 2/2. In terms of biological role, thiolesterase that catalyzes the hydrolysis of S-D-lactoyl-glutathione to form glutathione and D-lactic acid. This chain is Hydroxyacylglutathione hydrolase, found in Prochlorococcus marinus (strain NATL1A).